A 978-amino-acid chain; its full sequence is Rab3 GTPase-activating protein catalytic subunit (978 aa).

3 disordered regions span residues 533 to 554, 586 to 621, and 908 to 936; these read EGKKGNPLYSSSESSVNKTASD, HSDTEELKESGQESARKAKEETKENPSPKPEGRLHQ, and EEEPKRSSSSDDRRQTSGTDFPSPAGREL. The segment covering 540-554 has biased composition (polar residues); sequence LYSSSESSVNKTASD. Composition is skewed to basic and acidic residues over residues 586–619 and 909–922; these read HSDTEELKESGQESARKAKEETKENPSPKPEGRL and EEPKRSSSSDDRRQ.

It belongs to the Rab3-GAP catalytic subunit family. In terms of assembly, the Rab3 GTPase-activating complex is a heterodimer composed of rab3gap1 and rab3gap2. The Rab3 GTPase-activating complex interacts with DMXL2. Interacts with LMAN1.

It localises to the cytoplasm. It is found in the endoplasmic reticulum. The protein localises to the golgi apparatus. Its subcellular location is the cis-Golgi network. Catalytic subunit of the Rab3 GTPase-activating (Rab3GAP) complex composed of rab3gap1 and rab3gap2, which has GTPase-activating protein (GAP) activity towards various Rab3 subfamily members (RAB3A, RAB3B, RAB3C and RAB3D), RAB5A and RAB43, and guanine nucleotide exchange factor (GEF) activity towards RAB18. As part of the Rab3GAP complex, acts as a GAP for Rab3 proteins by converting active RAB3-GTP to the inactive form RAB3-GDP. Rab3 proteins are involved in regulated exocytosis of neurotransmitters and hormones. The Rab3GAP complex, acts as a GEF for RAB18 by promoting the conversion of inactive RAB18-GDP to the active form RAB18-GTP. Recruits and stabilizes RAB18 at the cis-Golgi membrane where RAB18 is most likely activated. Also involved in RAB18 recruitment at the endoplasmic reticulum (ER) membrane where it maintains proper ER structure. Required for normal eye and brain development. May participate in neurodevelopmental processes such as proliferation, migration and differentiation before synapse formation, and non-synaptic vesicular release of neurotransmitters. This chain is Rab3 GTPase-activating protein catalytic subunit (rab3gap1), found in Xenopus laevis (African clawed frog).